Here is a 515-residue protein sequence, read N- to C-terminus: 1-pyrroline-5-carboxylate dehydrogenase (515 aa).

Catalysis depends on residues glutamate 286 and cysteine 320.

It belongs to the aldehyde dehydrogenase family. RocA subfamily.

The catalysed reaction is L-glutamate 5-semialdehyde + NAD(+) + H2O = L-glutamate + NADH + 2 H(+). Its pathway is amino-acid degradation; L-proline degradation into L-glutamate; L-glutamate from L-proline: step 2/2. In Bacillus mycoides (strain KBAB4) (Bacillus weihenstephanensis), this protein is 1-pyrroline-5-carboxylate dehydrogenase.